Consider the following 83-residue polypeptide: Small ribosomal subunit protein bS16 (83 aa).

The protein belongs to the bacterial ribosomal protein bS16 family.

This is Small ribosomal subunit protein bS16 from Shewanella putrefaciens (strain CN-32 / ATCC BAA-453).